The sequence spans 563 residues: Tripeptidyl-peptidase 1 (563 aa).

Residues Met1–Cys19 form the signal peptide. A propeptide spans Ser20–Gly195 (removed in mature form). An intrachain disulfide couples Cys111 to Cys122. One can recognise a Peptidase S53 domain in the interval Gly199–Pro563. Residues Asn210 and Asn222 are each glycosylated (N-linked (GlcNAc...) asparagine). Catalysis depends on charge relay system residues Glu272 and Asp276. Asn286, Asn313, and Asn443 each carry an N-linked (GlcNAc...) asparagine glycan. Cystine bridges form between Cys365–Cys526 and Cys522–Cys537. The active-site Charge relay system is the Ser475. Asp517 and Val518 together coordinate Ca(2+). Gly539, Gly541, and Asp543 together coordinate Ca(2+).

Monomer. Interacts with CLN5. Interacts with CLN3. Ca(2+) serves as cofactor. Post-translationally, activated by autocatalytic proteolytical processing upon acidification. N-glycosylation is required for processing and activity.

It is found in the lysosome. The protein localises to the melanosome. The enzyme catalyses Release of an N-terminal tripeptide from a polypeptide, but also has endopeptidase activity.. Lysosomal serine protease with tripeptidyl-peptidase I activity. May act as a non-specific lysosomal peptidase which generates tripeptides from the breakdown products produced by lysosomal proteinases. Requires substrates with an unsubstituted N-terminus. The protein is Tripeptidyl-peptidase 1 (TPP1) of Pan troglodytes (Chimpanzee).